The primary structure comprises 226 residues: Probable functional amyloid protease FapD (226 aa).

Positions Met1 to Ala18 are cleaved as a signal peptide. The 131-residue stretch at Gln50–Val180 folds into the Peptidase C39 domain. Cys56 is an active-site residue.

It belongs to the FapD family.

It is found in the periplasm. In terms of biological role, probable protease that might be involved in processing fibril precursors. Upon overexpression of the endogenous six-gene locus (fapA-fapF), cells form large clumps during liquid growth, make large amounts of biofilm and produce amyloid fibrils. The polypeptide is Probable functional amyloid protease FapD (Pseudomonas aeruginosa (strain ATCC 15692 / DSM 22644 / CIP 104116 / JCM 14847 / LMG 12228 / 1C / PRS 101 / PAO1)).